Consider the following 471-residue polypeptide: Pneumolysin (471 aa).

Beta stranded transmembrane passes span 158-171 (MEQL…DFEK), 178-187 (IDFNSVHSGE), 256-265 (SDEVEAAFEA), and 273-285 (APQT…LDNT). Residues 427-437 (ECTGLAWEWWR) carry the Conserved undecapeptide motif. The Cholesterol binding motif lies at 459-460 (TL).

It belongs to the cholesterol-dependent cytolysin family. Homooligomeric pore complex of 35 to 50 subunits; when inserted in the host membrane. In terms of processing, has a slightly altered apparent molecular weight in a secA2 deletion mutant, but no post-translational modifications have been found.

Its subcellular location is the secreted. It localises to the cell wall. It is found in the host cell membrane. A cholesterol-dependent toxin that causes cytolysis by forming pores in cholesterol containing host membranes. After binding to target membranes, the protein undergoes a major conformation change, leading to its insertion in the host membrane and formation of an oligomeric pore complex. Cholesterol is required for binding to host membranes, membrane insertion and pore formation; cholesterol binding is mediated by a Thr-Leu pair in the C-terminus. Can be reversibly inactivated by oxidation. The sequence is that of Pneumolysin (ply) from Streptococcus pneumoniae serotype 4 (strain ATCC BAA-334 / TIGR4).